The following is a 196-amino-acid chain: Phosphatidyl-N-methylethanolamine N-methyltransferase (196 aa).

A topological domain (lumenal) is located at residue methionine 1. Residues 2–28 constitute an intramembrane region (helical); that stretch reads AIFEINNSFLICAVSIALNPLLWNIAA. Topologically, residues 29-40 are lumenal; sequence RSEYNHKTLTKL. A helical membrane pass occupies residues 41 to 62; that stretch reads ANGDSKKACYMLAACIFVAGIV. Over 63 to 89 the chain is Cytoplasmic; sequence RDLIYQNALKQQPTLGIFMNPLVQGIA. The helical transmembrane segment at 90–110 threads the bilayer; that stretch reads KLIFCFGSVLVLSSMYKLGLV. 94–96 is an S-adenosyl-L-methionine binding site; the sequence is CFG. Over 111–153 the chain is Lumenal; that stretch reads GTYLGDYFGFLLPERVSGFPFNVNDNPMYNGSTLCFLSTALRY. A helical transmembrane segment spans residues 154 to 174; sequence GKVAGLLLTLEVFFVYRIALK. Residues 175-196 are Cytoplasmic-facing; that stretch reads FEEPFTAKIYAARDSKQAKKSE. 176–177 lines the S-adenosyl-L-methionine pocket; sequence EE.

This sequence belongs to the class VI-like SAM-binding methyltransferase superfamily. PEMT/PEM2 methyltransferase family.

Its subcellular location is the endoplasmic reticulum membrane. It is found in the mitochondrion membrane. The catalysed reaction is a 1,2-diacyl-sn-glycero-3-phospho-N-methylethanolamine + S-adenosyl-L-methionine = a 1,2-diacyl-sn-glycero-3-phospho-N,N-dimethylethanolamine + S-adenosyl-L-homocysteine + H(+). It carries out the reaction a 1,2-diacyl-sn-glycero-3-phospho-N,N-dimethylethanolamine + S-adenosyl-L-methionine = a 1,2-diacyl-sn-glycero-3-phosphocholine + S-adenosyl-L-homocysteine + H(+). Its pathway is phospholipid metabolism; phosphatidylcholine biosynthesis. Its function is as follows. Catalyzes the second two steps of the methylation pathway of phosphatidylcholine biosynthesis, the SAM-dependent methylation of phosphatidylmonomethylethanolamine (PMME) to phosphatidyldimethylethanolamine (PDME) and of PDME to phosphatidylcholine (PC). The polypeptide is Phosphatidyl-N-methylethanolamine N-methyltransferase (Schizosaccharomyces pombe (strain 972 / ATCC 24843) (Fission yeast)).